Consider the following 261-residue polypeptide: Kallikrein 1-related peptidase b1 (261 aa).

The signal sequence occupies residues 1–18 (MWFLILFLALSLGGIDAA). Residues 19 to 24 (PPVQSR) constitute a propeptide, activation peptide. Residues 25 to 258 (IVGGFKCEKN…FTSWIKDTLA (234 aa)) enclose the Peptidase S1 domain. Intrachain disulfides connect Cys-31-Cys-173, Cys-50-Cys-66, Cys-152-Cys-219, Cys-184-Cys-198, and Cys-209-Cys-234. The Charge relay system role is filled by His-65. An N-linked (GlcNAc...) asparagine glycan is attached at Asn-102. Asp-120 (charge relay system) is an active-site residue. Residue Ser-213 is the Charge relay system of the active site.

The protein belongs to the peptidase S1 family. Kallikrein subfamily.

It carries out the reaction Preferential cleavage of Arg-|-Xaa bonds in small molecule substrates. Highly selective action to release kallidin (lysyl-bradykinin) from kininogen involves hydrolysis of Met-|-Xaa or Leu-|-Xaa.. Its function is as follows. Glandular kallikreins cleave Met-Lys and Arg-Ser bonds in kininogen to release Lys-bradykinin. This Mus musculus (Mouse) protein is Kallikrein 1-related peptidase b1 (Klk1b1).